A 229-amino-acid polypeptide reads, in one-letter code: GTP cyclohydrolase 1 (229 aa).

The segment at 1 to 31 (MFRESDNTIAPSNQDLNKPVVDKEQPAERTP) is disordered. Residues 7 to 16 (NTIAPSNQDL) are compositionally biased toward polar residues. Residues Cys117, His120, and Cys188 each contribute to the Zn(2+) site.

It belongs to the GTP cyclohydrolase I family. In terms of assembly, toroid-shaped homodecamer, composed of two pentamers of five dimers.

The enzyme catalyses GTP + H2O = 7,8-dihydroneopterin 3'-triphosphate + formate + H(+). It functions in the pathway cofactor biosynthesis; 7,8-dihydroneopterin triphosphate biosynthesis; 7,8-dihydroneopterin triphosphate from GTP: step 1/1. The sequence is that of GTP cyclohydrolase 1 from Rhodopirellula baltica (strain DSM 10527 / NCIMB 13988 / SH1).